Reading from the N-terminus, the 119-residue chain is Large ribosomal subunit protein uL18 (119 aa).

It belongs to the universal ribosomal protein uL18 family. Part of the 50S ribosomal subunit; part of the 5S rRNA/L5/L18/L25 subcomplex. Contacts the 5S and 23S rRNAs.

Its function is as follows. This is one of the proteins that bind and probably mediate the attachment of the 5S RNA into the large ribosomal subunit, where it forms part of the central protuberance. The chain is Large ribosomal subunit protein uL18 from Micrococcus luteus (Micrococcus lysodeikticus).